Consider the following 408-residue polypeptide: Voltage-gated potassium channel subunit beta-1 (408 aa).

Thr-97, Trp-98, Gln-104, and Asp-126 together coordinate NADP(+). Tyr-131 (proton donor/acceptor) is an active-site residue. NADP(+) is bound by residues Asn-199, Ser-229, Arg-230, Gln-255, Trp-284, Ser-285, Pro-286, Leu-287, Ala-288, Cys-289, Lys-295, Arg-305, Gly-364, Ser-366, Gln-370, Glu-373, and Asn-374.

It belongs to the shaker potassium channel beta subunit family. Homotetramer. Interaction with tetrameric potassium channel alpha subunits gives rise to a heterooctamer. Identified in potassium channel complexes containing KCNA1, KCNA2, KCNA4, KCNA5, KCNA6, KCNAB1 and KCNAB2. Part of a complex containing KCNA1, KCNA4 and LGI1; interaction with LGI1 inhibits down-regulation of KCNA1 channel activity. Interacts with the dimer formed by GNB1 and GNG2; this enhances KCNA1 binding. Interacts with SQSTM1. In terms of tissue distribution, expression most abundant in aorta. Also high in left ventricle. Also detected in right ventricle, atrium, brain, skeletal muscle and kidney. Not detected in liver.

The protein localises to the cytoplasm. It localises to the membrane. The protein resides in the cell membrane. The enzyme catalyses a primary alcohol + NADP(+) = an aldehyde + NADPH + H(+). The catalysed reaction is a secondary alcohol + NADP(+) = a ketone + NADPH + H(+). In terms of biological role, regulatory subunit of the voltage-gated potassium (Kv) Shaker channels composed of pore-forming and potassium-conducting alpha subunits and of regulatory beta subunits. The beta-1/KCNAB1 cytoplasmic subunit mediates closure of delayed rectifier potassium channels by physically obstructing the pore via its N-terminal domain and increases the speed of channel closure for other family members. Promotes the inactivation of Kv1.1/KCNA1, Kv1.2/KCNA2, Kv1.4/KCNA4, Kv1.5/KCNA5 and Kv1.6/KCNA6 alpha subunit-containing channels. Displays nicotinamide adenine dinucleotide phosphate (NADPH)-dependent aldoketoreductase activity by catalyzing the NADPH-dependent reduction of a variety of endogenous aldehydes and ketones. The binding of NADPH is required for efficient down-regulation of potassium channel activity. Oxidation of the bound NADPH restrains N-terminal domain from blocking the channel, thereby decreasing N-type inactivation of potassium channel activity. In Mustela putorius (European polecat), this protein is Voltage-gated potassium channel subunit beta-1 (KCNAB1).